A 1771-amino-acid polypeptide reads, in one-letter code: Gag-Pro-Pol polyprotein (1771 aa).

G2 carries the N-myristoyl glycine; by host lipid modification. The propeptide occupies 101-161; sequence AAVAQTEEIL…TKKPKRFPVL (61 aa). Polar residues-rich tracts occupy residues 113 to 125 and 140 to 152; these read NSQTDLTKTSQNP and KSSSLQDKGLSST. A disordered region spans residues 113-178; sequence NSQTDLTKTS…DPEDPNPSEV (66 aa). A PPXY motif motif is present at residues 202 to 205; it reads PPPY. The short motif at 210-213 is the PTAP/PSAP motif element; sequence PSAP. Residues 216 to 257 adopt a coiled-coil conformation; it reads MAVVNPKEELKEKIAQLEEQIKLEELHQALISKLQKLKTGNE. Residues 260–279 are disordered; that stretch reads THPDTAGGLSRTPHWPGQHI. Residues 335 to 338 carry the PTAP/PSAP motif motif; the sequence is ATAP. 2 consecutive CCHC-type zinc fingers follow at residues 547–564 and 576–593; these read GCCFKCGKKGHFAKNCHE and GLCPRCKRGKHWANECKS. The segment at 592-626 is disordered; the sequence is KSKTDNQGNPIPPHQGNRVEGPAPGPETSLWGSQL. In terms of domain architecture, Peptidase A2 spans 780–856; it reads FTGLIDTGAD…LPVNLWGRDL (77 aa). The Protease; shared with dimeric partner role is filled by D785. One can recognise a G-patch domain in the interval 867–913; that stretch reads PNDIVTAQMLAQGYSPGKGLGKKENGILHPIPNQGQSNKKGFGNFLT. One can recognise a Reverse transcriptase domain in the interval 959–1147; that stretch reads LEAGHITESS…DPYTYLGFEL (189 aa). 7 residues coordinate Mg(2+): D1024, D1099, D1100, D1370, E1399, D1420, and D1484. Residues 1361–1492 form the RNase H type-1 domain; it reads LNNALLVFTD…ADLATKIVAS (132 aa). Residues 1496-1537 form an Integrase-type zinc finger; it reads TNLESAQNAHTLHHLNAQTLRLMFNIPREQARQIVKQCPICV. The Zn(2+) site is built by H1505, H1509, C1533, and C1536. The region spanning 1550-1719 is the Integrase catalytic domain; it reads RGLFPNMIWQ…NPKKQFAMVK (170 aa). Mg(2+) is bound by residues D1561, D1618, and E1654. The segment at residues 1716–1765 is a DNA-binding region (integrase-type); the sequence is AMVKWKDPLDNTWHGPDPVLIWGRGSVCVYSQTYDAARWLPERLVRQVSN.

Belongs to the retroviral Pol polyprotein family. As to quaternary structure, homodimer. Interacts with the G-patch peptide. In terms of assembly, interacts with the reverse transcriptase/ribonuclease H. As to quaternary structure, homotrimer. Mg(2+) is required as a cofactor. Post-translationally, released by autocatalytic processing. The protease can undergo further autoprocessing to yield 2 shorter but enzymatically active forms of 12 kDa and 13 kDa. In terms of processing, myristoylated. Myristoylation of the matrix (MA) domain mediates the transport and binding of Gag polyproteins to the host plasma membrane and is required for the assembly of viral particles. Specific enzymatic cleavages in vivo yield mature proteins.

Its subcellular location is the virion. It carries out the reaction DNA(n) + a 2'-deoxyribonucleoside 5'-triphosphate = DNA(n+1) + diphosphate. The catalysed reaction is Endonucleolytic cleavage to 5'-phosphomonoester.. The enzyme catalyses dUTP + H2O = dUMP + diphosphate + H(+). Matrix protein. Functionally, nucleocapsid protein p14: Nucleocapsid protein. In terms of biological role, capsid protein. Its function is as follows. The aspartyl protease mediates proteolytic cleavages of Gag and Gag-Pol polyproteins during or shortly after the release of the virion from the plasma membrane. Cleavages take place as an ordered, step-wise cascade to yield mature proteins. This process is called maturation. Displays maximal activity during the budding process just prior to particle release from the cell. Enhances the activity of the reverse transcriptase. May be part of the mature RT. Functionally, RT is a multifunctional enzyme that converts the viral dimeric RNA genome into dsDNA in the cytoplasm, shortly after virus entry into the cell. This enzyme displays a DNA polymerase activity that can copy either DNA or RNA templates, and a ribonuclease H (RNase H) activity that cleaves the RNA strand of RNA-DNA heteroduplexes in a partially processive 3' to 5' endonucleasic mode. Conversion of viral genomic RNA into dsDNA requires many steps. A tRNA binds to the primer-binding site (PBS) situated at the 5' end of the viral RNA. RT uses the 3' end of the tRNA primer to perfom a short round of RNA-dependent minus-strand DNA synthesis. The reading proceeds through the U5 region and ends after the repeated (R) region which is present at both ends of viral RNA. The portion of the RNA-DNA heteroduplex is digested by the RNase H, resulting in a ssDNA product attached to the tRNA primer. This ssDNA/tRNA hybridizes with the identical R region situated at the 3' end of viral RNA. This template exchange, known as minus-strand DNA strong stop transfer, can be either intra- or intermolecular. RT uses the 3' end of this newly synthesized short ssDNA to perfom the RNA-dependent minus-strand DNA synthesis of the whole template. RNase H digests the RNA template except for a polypurine tract (PPT) situated at the 5' end of the genome. It is not clear if both polymerase and RNase H activities are simultaneous. RNase H probably can proceed both in a polymerase-dependent (RNA cut into small fragments by the same RT performing DNA synthesis) and a polymerase-independent mode (cleavage of remaining RNA fragments by free RTs). Secondly, RT performs DNA-directed plus-strand DNA synthesis using the PPT that has not been removed by RNase H as primers. PPT and tRNA primers are then removed by RNase H. The 3' and 5' ssDNA PBS regions hybridize to form a circular dsDNA intermediate. Strand displacement synthesis by RT to the PBS and PPT ends produces a blunt ended, linear dsDNA copy of the viral genome that includes long terminal repeats (LTRs) at both ends. In terms of biological role, catalyzes viral DNA integration into the host chromosome, by performing a series of DNA cutting and joining reactions. The polypeptide is Gag-Pro-Pol polyprotein (gag-pro-pol) (Macaca mulatta (Rhesus macaque)).